A 663-amino-acid polypeptide reads, in one-letter code: Protein LNK2 (663 aa).

2 disordered regions span residues 528 to 549 and 590 to 663; these read HYTS…VIPR and MEGP…KRKL. Residues 602–629 show a composition bias toward basic and acidic residues; the sequence is GTEEKGNFPKCSIRETHLTKQKAQKEEG. Positions 639-648 are enriched in polar residues; it reads APNSGSSSTV.

As to quaternary structure, interacts with CCA1, LHY, REV4 and REV8, but not with PRR7 or PRR9. Expressed in roots, stems, leaves, seedlings, cotyledons, inflorescences and siliques. Highest expression in root tips, young leaves and vasculatur tissues.

The protein resides in the nucleus. Transcriptional coactivator necessary for expression of the clock genes PRR5 and TOC1. Antagonizes REV8 function in the regulation of anthocyanin accumulation. Involved in red light input to the clock. Activates clock-controlled genes with afternoon peak. Mediates light inhibition of hypocotyl elongation. Unable to bind to DNA, but recruited to the evening element (EE)-containing region of the PRR5 and TOC1 promoters through its interaction with the DNA binding proteins REV8 and REV4. This is Protein LNK2 from Arabidopsis thaliana (Mouse-ear cress).